The sequence spans 275 residues: Voltage-dependent calcium channel gamma-5 subunit (275 aa).

4 helical membrane passes run 8–28 (ALTL…GIAV), 103–123 (FPLV…IGHI), 129–149 (ILAF…VVGL), and 181–201 (FAAI…YLFM).

The protein belongs to the PMP-22/EMP/MP20 family. CACNG subfamily. As to quaternary structure, the L-type calcium channel is composed of five subunits: alpha-1, alpha-2/delta, beta and gamma. Acts as an auxiliary subunit for AMPA-selective glutamate receptors (AMPARs). Found in a complex with GRIA1, GRIA2, GRIA3, GRIA4, CNIH2, CNIH3, CACNG2, CACNG3, CACNG4, CACNG7 and CACNG8. Interacts with GRIA1, GRIA2, GRIA3 and GRIA4.

It localises to the membrane. It is found in the postsynaptic density membrane. In terms of biological role, regulates the gating properties of AMPA-selective glutamate receptors (AMPARs). Modulates their gating properties by accelerating their rates of activation, deactivation and desensitization. Displays subunit-specific AMPA receptor regulation. Shows specificity for GRIA1, GRIA4 and the long isoform of GRIA2. According to PubMed:18817736, shows only specificity for GRIA2 and specifically to the form of GRIA2 for which a single amino acid in the pore region has been edited from a glutamine to an arginine residue. Thought to stabilize the calcium channel in an inactivated (closed) state. The polypeptide is Voltage-dependent calcium channel gamma-5 subunit (Cacng5) (Rattus norvegicus (Rat)).